We begin with the raw amino-acid sequence, 40 residues long: Subtilisin-like serine protease AS-E1 (40 aa).

In terms of domain architecture, Peptidase S8 spans 4–40 (PWGLARISHRTTGATSYVYDDSAGEGTCSYIIDTGIY). Aspartate 36 serves as the catalytic Charge relay system.

Belongs to the peptidase S8 family. In terms of assembly, homodimer.

Strongly inhibited by antipain and PMSF. Inhibited by benzamidine and aprotinin by 80% and 17% respectively. Little or no inhibition by EDTA, E-64, iodoacetic acid, leupeptin and FUT-175. Subtilisin-like serine protease. Cleaves prothrombin at 155-Arg-|-Ser-156, 45-Thr-|-Ala-46 and 316-Tyr-|-Ile-317 to produce meizothrombin(desF1)-like molecules. Degrades fibrinogen. Inhibits plasma coagulation. The chain is Subtilisin-like serine protease AS-E1 from Acremonium sp.